A 634-amino-acid chain; its full sequence is MSVETQKETLGFQTEVKQLLHLMIHSLYSNKEIFLRELISNASDAADKLRFEALAKPELLEGGAELKIRLSFDKDAKTVTLEDNGIGMSRDEVIAHLGTIAKSGTADFLKNLSGDQKKDSHLIGQFGVGFYSAFIVADKVDVFTRRAGLSAAEGVHWSSKGEGEFEVATVEKAERGTRIVLHLKSGEEEFADGWRLRNIVKKYSDHIALPIELPKEHYGEEKDKPAEVEWETVNRASALWTRPRAEVKDEEYQEFYKHVAHDFENPLTWSHNKVEGKLEYTSLLYVPGRAPFDLYHREAPKGLKLYVQRVFIMDQADEFLPLYLRFIKGVVDSNDLSLNVSREILQKDPVIDSMKSALTKRVLDMLEKLAKDKPEEYKAFWKAFGQVLKEGPAEDFANKEKIAGLLRFASTAGEGDEQSVSLADYLGRVKDGQDKIYYLTGESYAQIKNSPHLEVFRKKGIEVLLLTDRIDEWLMSYLTEFDGKQFVDVARGDLDLGKLDSEEDKKAQEEVAKAKEGLIERLKGALGEQVKEVRVSHRLTDSPAILAIGEQDLGLQMRQILEASGQKVPESKPIFEFNPSHPLIERLDAEADEDRFVDLTHILFDQAALAAGDSLKDPAAYVQRLNKLLVELSA.

Positions 1-342 (MSVETQKETL…SNDLSLNVSR (342 aa)) are a; substrate-binding. A b region spans residues 343 to 559 (EILQKDPVID…EQDLGLQMRQ (217 aa)). The interval 560 to 634 (ILEASGQKVP…LNKLLVELSA (75 aa)) is c.

Belongs to the heat shock protein 90 family. As to quaternary structure, homodimer.

The protein localises to the cytoplasm. Functionally, molecular chaperone. Has ATPase activity. This is Chaperone protein HtpG from Ectopseudomonas mendocina (strain ymp) (Pseudomonas mendocina).